We begin with the raw amino-acid sequence, 517 residues long: Crotonobetaine/carnitine--CoA ligase (517 aa).

It belongs to the ATP-dependent AMP-binding enzyme family.

The enzyme catalyses 4-(trimethylamino)butanoate + ATP + CoA = 4-(trimethylamino)butanoyl-CoA + AMP + diphosphate. The catalysed reaction is crotonobetaine + ATP + CoA = crotonobetainyl-CoA + AMP + diphosphate. It catalyses the reaction (R)-carnitine + ATP + CoA = (R)-carnitinyl-CoA + AMP + diphosphate. The protein operates within amine and polyamine metabolism; carnitine metabolism. In terms of biological role, catalyzes the transfer of CoA to carnitine, generating the initial carnitinyl-CoA needed for the CaiB reaction cycle. Also has activity toward crotonobetaine and gamma-butyrobetaine. This chain is Crotonobetaine/carnitine--CoA ligase, found in Shigella flexneri.